Reading from the N-terminus, the 671-residue chain is MAELTALYTLTAQMKREGICRLLVLSGEEGWCFDHALKLRDALPGDWLWISPQLDAENHCSPSALQTLLGREFRHAVFDARHGFDAAAFAALSGTLKAGSWLVLLLPVWEEWENQPDADSLRWSDCPDPIATPHFVQHLKRVLTADNDAILWRQNQPFSLAHFTPRTDWHPATGAPQPEQQQLLQQLLTMPPGVAAVTAARGRGKSALAGQLISRIAGSAIVTAPAKAATDVLAQFAGEKFRFIAPDALLASDEQADWLVVDEAAAIPAPLLHQLVSRFPRTLLTTTVQGYEGTGRGFLLKFCARFPHLHRFELQQPIRWAQGCPLEKMVSEALVFNDENFTHTPQGNIVISAFEQTLWRSEPETPLKVYQLLSGAHYRTLPLDLRRMMDAPGQHFLQAAGENEIAGALWLVDEGGLSQELSQAVWAGFRRPRGNLVAQSLAAHGSNPLAATLRGRRVSRIAVHPARQREGTGRQLIAGALQYTHDLDYLSVSFGYTGELWRFWQRCGFVLVRMGNHREASSGCYTAMALLPMSDAGKQLAEREHYRLRRDAQALAQWNGEMLPVDPLNDAILSDDDWLELAGFAFAHRPLLTSLGCLLRLLQTSELALPALRGRLQKNASDAQLCTTLKLSGRKMLLVRQREEAAQALFALNEVRTERLRDRITQWQFFH.

Residues Gln-180, 202-211 (GRGKSALAGQ), and Arg-319 contribute to the ATP site. An N-acetyltransferase domain is found at 356-531 (QTLWRSEPET…SGCYTAMALL (176 aa)). Acetyl-CoA-binding positions include 461 to 463 (IAV), 468 to 474 (QREGTGR), Glu-499, and Arg-506.

Belongs to the RNA cytidine acetyltransferase family. TmcA subfamily.

Its subcellular location is the cytoplasm. It catalyses the reaction cytidine(34) in elongator tRNA(Met) + acetyl-CoA + ATP + H2O = N(4)-acetylcytidine(34) in elongator tRNA(Met) + ADP + phosphate + CoA + H(+). Its function is as follows. Catalyzes the formation of N(4)-acetylcytidine (ac(4)C) at the wobble position of tRNA(Met), by using acetyl-CoA as an acetyl donor and ATP (or GTP). In Shigella flexneri serotype 5b (strain 8401), this protein is tRNA(Met) cytidine acetyltransferase TmcA.